Here is a 333-residue protein sequence, read N- to C-terminus: Adenosine deaminase (333 aa).

Residues histidine 12 and histidine 14 each coordinate Zn(2+). 3 residues coordinate substrate: histidine 14, aspartate 16, and glycine 170. Histidine 197 is a Zn(2+) binding site. Catalysis depends on glutamate 200, which acts as the Proton donor. Residue aspartate 278 participates in Zn(2+) binding. Position 279 (aspartate 279) interacts with substrate.

The protein belongs to the metallo-dependent hydrolases superfamily. Adenosine and AMP deaminases family. Adenosine deaminase subfamily. Zn(2+) serves as cofactor.

It carries out the reaction adenosine + H2O + H(+) = inosine + NH4(+). It catalyses the reaction 2'-deoxyadenosine + H2O + H(+) = 2'-deoxyinosine + NH4(+). In terms of biological role, catalyzes the hydrolytic deamination of adenosine and 2-deoxyadenosine. The polypeptide is Adenosine deaminase (Escherichia coli O81 (strain ED1a)).